The primary structure comprises 635 residues: Threonine--tRNA ligase (635 aa).

The TGS domain maps to 1 to 61 (MTVVRLPDGT…ETDSDLVLIT (61 aa)). The segment at 242–533 (DHRKLGKQLD…LIEHHAGALP (292 aa)) is catalytic. Residues Cys333, His384, and His510 each contribute to the Zn(2+) site.

This sequence belongs to the class-II aminoacyl-tRNA synthetase family. As to quaternary structure, homodimer. Requires Zn(2+) as cofactor.

The protein localises to the cytoplasm. The catalysed reaction is tRNA(Thr) + L-threonine + ATP = L-threonyl-tRNA(Thr) + AMP + diphosphate + H(+). Its function is as follows. Catalyzes the attachment of threonine to tRNA(Thr) in a two-step reaction: L-threonine is first activated by ATP to form Thr-AMP and then transferred to the acceptor end of tRNA(Thr). Also edits incorrectly charged L-seryl-tRNA(Thr). This chain is Threonine--tRNA ligase, found in Nitrosomonas europaea (strain ATCC 19718 / CIP 103999 / KCTC 2705 / NBRC 14298).